Consider the following 398-residue polypeptide: Inner membrane protein YjgN (398 aa).

The Cytoplasmic segment spans residues 1-24 (MAQVINEMDVPSHSFVFHGTGERY). A helical membrane pass occupies residues 25–45 (FLICVVNVLLTIITLGIYLPW). Topologically, residues 46–73 (ALMKCKRYLYANMEVNGQRFSYGITGGN) are periplasmic. Residues 74–94 (VFVSCLFFVFFYFAILMTVSA) form a helical membrane-spanning segment. D95 is a topological domain (cytoplasmic). A helical membrane pass occupies residues 96–116 (MPLVGCVLTLLLLVLLIFMAA). The Periplasmic portion of the chain corresponds to 117-142 (KGLRHQALMTSLNGVRFSFNCSMKGF). Residues 143–163 (WWVTFFLPILMAIGMGTVFFI) traverse the membrane as a helical segment. The Cytoplasmic segment spans residues 164–175 (STKMLPANSSSS). A helical transmembrane segment spans residues 176 to 196 (VIISMVLMAIVGIVSIGIFNG). The Periplasmic segment spans residues 197–228 (TLYSLVMSFLWSNTSFGIHRFKVKLDTTYCIK). The chain crosses the membrane as a helical span at residues 229–249 (YAILAFLALLPFLAVAGYIIF). Topologically, residues 250-278 (DQILNAYDSSVYANDDIENLQQFMEMQRK) are cytoplasmic. The chain crosses the membrane as a helical span at residues 279 to 299 (MIIAQLIYYFGIAVSTSYLTV). The Periplasmic segment spans residues 300-333 (SLRNHFMSNLSLNDGRIRFRLTLTYHGMLYRMCA). Residues 334–354 (LVVISGITGGLAYPLLKIWMI) form a helical membrane-spanning segment. Residues 355–398 (DWQAKNTYLLGDLDDLPLINKEEQPDKGFLASISRGVMPSLPFL) lie on the Cytoplasmic side of the membrane.

It is found in the cell inner membrane. This is Inner membrane protein YjgN (yjgN) from Escherichia coli (strain K12).